Reading from the N-terminus, the 58-residue chain is Large ribosomal subunit protein bL32 (58 aa).

The disordered stretch occupies residues 1–23; that stretch reads MAVPARHTSSAKKNRRRTHYKLT. Residues 9 to 20 are compositionally biased toward basic residues; sequence SSAKKNRRRTHY.

This sequence belongs to the bacterial ribosomal protein bL32 family.

This chain is Large ribosomal subunit protein bL32 (rpmF), found in Lactococcus lactis subsp. cremoris (Streptococcus cremoris).